Consider the following 1054-residue polypeptide: Desmoglein-1 (1054 aa).

A signal peptide spans 1 to 23; sequence MNWHFLRTATVLLIFLVVVEINS. A propeptide spanning residues 24–49 is cleaved from the precursor; sequence EFRIQVRDYNTKNGTIKWHSIRRQKR. N-linked (GlcNAc...) asparagine glycans are attached at residues asparagine 36, asparagine 110, and asparagine 180. 4 Cadherin domains span residues 50 to 157, 158 to 269, 270 to 389, and 386 to 493; these read EWIK…PPVF, SMST…IPYM, EPSS…RPGS, and RPGS…KDSE. Topologically, residues 50 to 566 are extracellular; the sequence is EWIKFAAACR…NLSDNVHFGP (517 aa). Positions 487-554 are disordered; that stretch reads GWEKDSEKVT…QSNNNHQELG (68 aa). Low complexity predominate over residues 496 to 507; sequence TSSQNSGSSTGD. A compositionally biased stretch (gly residues) spans 508-517; the sequence is SSGGTGGGGR. The span at 523–534 shows a compositional bias: low complexity; the sequence is GDTTTNTGGKTS. A compositionally biased stretch (polar residues) spans 542–554; sequence TQTQSNNNHQELG. The N-linked (GlcNAc...) asparagine glycan is linked to asparagine 557. The helical transmembrane segment at 567 to 587 threads the bilayer; sequence AGIGLLIMGFLVLGLVPFLLM. Over 588-1054 the chain is Cytoplasmic; the sequence is CCDCGGAPGA…TKYSTVQYTK (467 aa). 5 Desmoglein repeat repeats span residues 830-856, 857-886, 887-916, 917-944, and 945-973; these read TYPS…TVTE, SYTT…ERVV, GPIS…ERVI, APSS…ERVI, and RPAS…ERVV. The disordered stretch occupies residues 1018–1040; it reads GHVRSSSDHHFSQTLGSASPSTA. The segment covering 1029–1040 has biased composition (polar residues); it reads SQTLGSASPSTA.

Binds to JUP/plakoglobin. Interacts with PKP2. Interacts with DSC3; there is evidence to suggest that the interaction promotes cell-cell adhesion of keratinocytes.

The protein localises to the cell membrane. Its subcellular location is the cell junction. It localises to the desmosome. It is found in the cytoplasm. The protein resides in the nucleus. In terms of biological role, component of intercellular desmosome junctions. Involved in the interaction of plaque proteins and intermediate filaments mediating cell-cell adhesion. The polypeptide is Desmoglein-1 (DSG1) (Canis lupus familiaris (Dog)).